Consider the following 124-residue polypeptide: MARILGVDIPNNKRVVISLTYIFGIGKSRSQEILSKAKIDENKKVSALSEEELATIRKIASEYVIEGDLRREVAMNIKRLMEIGSYRGIRHRRNLPVRGQRTKCNARTRKGPRKTVANKKIETK.

Basic residues predominate over residues 103–117 (KCNARTRKGPRKTVA). The interval 103–124 (KCNARTRKGPRKTVANKKIETK) is disordered.

The protein belongs to the universal ribosomal protein uS13 family. As to quaternary structure, part of the 30S ribosomal subunit. Forms a loose heterodimer with protein S19. Forms two bridges to the 50S subunit in the 70S ribosome.

In terms of biological role, located at the top of the head of the 30S subunit, it contacts several helices of the 16S rRNA. In the 70S ribosome it contacts the 23S rRNA (bridge B1a) and protein L5 of the 50S subunit (bridge B1b), connecting the 2 subunits; these bridges are implicated in subunit movement. Contacts the tRNAs in the A and P-sites. The polypeptide is Small ribosomal subunit protein uS13 (Malacoplasma penetrans (strain HF-2) (Mycoplasma penetrans)).